A 195-amino-acid polypeptide reads, in one-letter code: Glycerol-3-phosphate acyltransferase (195 aa).

Helical transmembrane passes span 7–27, 52–72, 80–100, 113–133, and 147–167; these read IFIL…SYVI, LALL…AIAQ, ILFL…YLFF, LIFI…ICFL, and LIAL…IFTI.

Belongs to the PlsY family. In terms of assembly, probably interacts with PlsX.

It localises to the cell inner membrane. It carries out the reaction an acyl phosphate + sn-glycerol 3-phosphate = a 1-acyl-sn-glycero-3-phosphate + phosphate. The protein operates within lipid metabolism; phospholipid metabolism. In terms of biological role, catalyzes the transfer of an acyl group from acyl-phosphate (acyl-PO(4)) to glycerol-3-phosphate (G3P) to form lysophosphatidic acid (LPA). This enzyme utilizes acyl-phosphate as fatty acyl donor, but not acyl-CoA or acyl-ACP. The chain is Glycerol-3-phosphate acyltransferase from Ehrlichia ruminantium (strain Welgevonden).